We begin with the raw amino-acid sequence, 492 residues long: ATP synthase subunit beta, chloroplastic (492 aa).

170 to 177 (GGAGVGKT) is a binding site for ATP.

This sequence belongs to the ATPase alpha/beta chains family. F-type ATPases have 2 components, CF(1) - the catalytic core - and CF(0) - the membrane proton channel. CF(1) has five subunits: alpha(3), beta(3), gamma(1), delta(1), epsilon(1). CF(0) has four main subunits: a(1), b(1), b'(1) and c(9-12).

The protein resides in the plastid. Its subcellular location is the chloroplast thylakoid membrane. The catalysed reaction is ATP + H2O + 4 H(+)(in) = ADP + phosphate + 5 H(+)(out). Functionally, produces ATP from ADP in the presence of a proton gradient across the membrane. The catalytic sites are hosted primarily by the beta subunits. This Huperzia lucidula (Shining clubmoss) protein is ATP synthase subunit beta, chloroplastic.